Consider the following 844-residue polypeptide: DNA mismatch repair protein MutS (844 aa).

ATP is bound at residue 610–617 (GPNMGGKS).

The protein belongs to the DNA mismatch repair MutS family.

Its function is as follows. This protein is involved in the repair of mismatches in DNA. It is possible that it carries out the mismatch recognition step. This protein has a weak ATPase activity. The sequence is that of DNA mismatch repair protein MutS from Francisella tularensis subsp. mediasiatica (strain FSC147).